A 439-amino-acid chain; its full sequence is MNSPANSSAARPAAGPKSVAAFQRASALMPGGVNSPARAFGAVGGTPLFIERAEGPYLYDIDGNRYIDYIGSWGPMILGHAHPEVINAITQAAAKGTSYGAPTEAESRLAEQIIEAVPSIEKVRLVNSGTEATMSALRVARGATGRKKVIKFAGNYHGHVDSLLVAAGSAAATLGAPDSPGVTPGAAEDTLVLSYNDVSGLQNAFAQHGDDIAALILEPVVGNMGCVLPTMEFLNAARDLTTKHGSILIFDEVMTGFRVAYGGAQERFGVTPDMTTLGKIVGGGMPLGAYGGRADIMNQVLPAGKVFQAGTLSGNPVAVAAGSATLRLLKENPPYEQLERLADRLADGLDRAATSAGMAHTVAKAGAMLTLFFNPEPVDCWAVADRCDREAFGRYFWGLIDEGIYMPCSQFEALFFSQQHTEAMIDETIAAAEKVLKSL.

The residue at position 279 (lysine 279) is an N6-(pyridoxal phosphate)lysine.

The protein belongs to the class-III pyridoxal-phosphate-dependent aminotransferase family. HemL subfamily. Homodimer. The cofactor is pyridoxal 5'-phosphate.

It localises to the cytoplasm. The enzyme catalyses (S)-4-amino-5-oxopentanoate = 5-aminolevulinate. Its pathway is porphyrin-containing compound metabolism; protoporphyrin-IX biosynthesis; 5-aminolevulinate from L-glutamyl-tRNA(Glu): step 2/2. In Rhodopirellula baltica (strain DSM 10527 / NCIMB 13988 / SH1), this protein is Glutamate-1-semialdehyde 2,1-aminomutase.